The sequence spans 252 residues: Ribosomal RNA small subunit methyltransferase J (252 aa).

S-adenosyl-L-methionine is bound by residues 101 to 102, 117 to 118, 153 to 154, and aspartate 171; these read RD, ER, and SS.

This sequence belongs to the methyltransferase superfamily. RsmJ family.

It is found in the cytoplasm. It carries out the reaction guanosine(1516) in 16S rRNA + S-adenosyl-L-methionine = N(2)-methylguanosine(1516) in 16S rRNA + S-adenosyl-L-homocysteine + H(+). Its function is as follows. Specifically methylates the guanosine in position 1516 of 16S rRNA. The polypeptide is Ribosomal RNA small subunit methyltransferase J (Salmonella choleraesuis (strain SC-B67)).